Consider the following 634-residue polypeptide: CREB-regulated transcription coactivator 1 (634 aa).

Phosphoserine is present on residues S64 and S113. Disordered regions lie at residues 110-174 (RLGS…GSQD), 191-221 (TTSEADKNLSKQAWDTKKTGSRPKSCEVPGI), 258-331 (LPTP…TLSP), and 357-479 (QAGS…HTST). Position 149 is a phosphothreonine (T149). A Phosphoserine; by SIK1 and SIK2 modification is found at S151. A compositionally biased stretch (polar residues) spans 151-174 (SDSALHQSTMTPTQPESFSSGSQD). T161 is modified (phosphothreonine). A compositionally biased stretch (basic and acidic residues) spans 194–208 (EADKNLSKQAWDTKK). The Nuclear export signal motif lies at 242 to 258 (TGGSLPDLTNIHFPSPL). Composition is skewed to polar residues over residues 271–283 (ALSSSSSTGNLAA), 296–305 (GMSTPGSSPQ), and 314–331 (LSLSTEARRQQASPTLSP). A compositionally biased stretch (pro residues) spans 362-397 (QPPPQPQPPPPPPPASQQPPPPPPPQAPVRLPPGGP). The span at 446–479 (QYRTSAGSPANQSPTSPVSNQGFSPGSSPQHTST) shows a compositional bias: polar residues.

This sequence belongs to the TORC family. As to quaternary structure, binds, as a tetramer, through its N-terminal region, with the bZIP domain of CREB1. 'Arg-314' in the bZIP domain of CREB1 is essential for this interaction. Interaction, via its C-terminal, with TAF4, enhances recruitment of TAF4 to CREB1. Interacts with 14-3-3 proteins, including YWHAE/14-3-3 epsilon. Interacts with calmodulin-dependent catalytic subunit PPP3CA/calcineurin A. (Microbial infection) Interacts with HTLV1 Tax. Post-translationally, phosphorylation/dephosphorylation states of Ser-151 are required for regulating transduction of CREB activity. TORCs are inactive when phosphorylated, and active when dephosphorylated at this site. This primary site of phosphorylation is mediated by SIKs (SIK1 and SIK2), is regulated by cAMP and calcium levels and is dependent on the phosphorylation of SIKs by LKB1. As to expression, highly expressed in adult and fetal brain. Located to specific regions such as the prefrontal cortex and cerebellum. Very low expression in other tissues such as heart, spleen, lung, skeletal muscle, salivary gland, ovary and kidney.

It is found in the cytoplasm. The protein localises to the nucleus. Functionally, transcriptional coactivator for CREB1 which activates transcription through both consensus and variant cAMP response element (CRE) sites. Acts as a coactivator, in the SIK/TORC signaling pathway, being active when dephosphorylated and acts independently of CREB1 'Ser-133' phosphorylation. Enhances the interaction of CREB1 with TAF4. Regulates the expression of specific CREB-activated genes such as the steroidogenic gene, StAR. Potent coactivator of PGC1alpha and inducer of mitochondrial biogenesis in muscle cells. In the hippocampus, involved in late-phase long-term potentiation (L-LTP) maintenance at the Schaffer collateral-CA1 synapses. May be required for dendritic growth of developing cortical neurons. In concert with SIK1, regulates the light-induced entrainment of the circadian clock. In response to light stimulus, coactivates the CREB-mediated transcription of PER1 which plays an important role in the photic entrainment of the circadian clock. In terms of biological role, (Microbial infection) Plays a role of coactivator for TAX activation of the human T-cell leukemia virus type 1 (HTLV-1) long terminal repeats (LTR). The sequence is that of CREB-regulated transcription coactivator 1 from Homo sapiens (Human).